The sequence spans 287 residues: NAD kinase (287 aa).

The active-site Proton acceptor is the aspartate 70. NAD(+)-binding positions include 70 to 71 (DG), 144 to 145 (ND), arginine 155, lysine 172, aspartate 174, 185 to 190 (TAYSLS), and glutamine 244.

The protein belongs to the NAD kinase family. A divalent metal cation serves as cofactor.

It localises to the cytoplasm. It carries out the reaction NAD(+) + ATP = ADP + NADP(+) + H(+). Involved in the regulation of the intracellular balance of NAD and NADP, and is a key enzyme in the biosynthesis of NADP. Catalyzes specifically the phosphorylation on 2'-hydroxyl of the adenosine moiety of NAD to yield NADP. The chain is NAD kinase from Solibacter usitatus (strain Ellin6076).